The following is a 242-amino-acid chain: Demethylmenaquinone methyltransferase (242 aa).

Positions 74 and 93 each coordinate S-adenosyl-L-methionine.

This sequence belongs to the class I-like SAM-binding methyltransferase superfamily. MenG/UbiE family.

The enzyme catalyses a 2-demethylmenaquinol + S-adenosyl-L-methionine = a menaquinol + S-adenosyl-L-homocysteine + H(+). Its pathway is quinol/quinone metabolism; menaquinone biosynthesis; menaquinol from 1,4-dihydroxy-2-naphthoate: step 2/2. Functionally, methyltransferase required for the conversion of demethylmenaquinol (DMKH2) to menaquinol (MKH2). This Chlorobaculum tepidum (strain ATCC 49652 / DSM 12025 / NBRC 103806 / TLS) (Chlorobium tepidum) protein is Demethylmenaquinone methyltransferase.